The chain runs to 301 residues: General transcription and DNA repair factor IIH subunit TFB4 (301 aa).

The segment at 259 to 276 adopts a C4-type zinc-finger fold; the sequence is CSVCLSIFCEHHKKCSTC.

This sequence belongs to the TFB4 family. In terms of assembly, component of the 7-subunit TFIIH core complex composed of XPB, XPD, TFB1/GTF2H1, GTF2H2/P44, TFB4/GTF2H3, TFB2/GTF2H4 and TFB5/GTF2H5, which is active in NER. The core complex associates with the 3-subunit CDK-activating kinase (CAK) module composed of CYCH1/cyclin H1, CDKD and MAT1/At4g30820 to form the 10-subunit holoenzyme (holo-TFIIH) active in transcription.

It localises to the nucleus. In terms of biological role, component of the general transcription and DNA repair factor IIH (TFIIH) core complex, which is involved in general and transcription-coupled nucleotide excision repair (NER) of damaged DNA and, when complexed to CAK, in RNA transcription by RNA polymerase II. In NER, TFIIH acts by opening DNA around the lesion to allow the excision of the damaged oligonucleotide and its replacement by a new DNA fragment. In transcription, TFIIH has an essential role in transcription initiation. When the pre-initiation complex (PIC) has been established, TFIIH is required for promoter opening and promoter escape. Phosphorylation of the C-terminal tail (CTD) of the largest subunit of RNA polymerase II by the kinase module CAK controls the initiation of transcription. The sequence is that of General transcription and DNA repair factor IIH subunit TFB4 from Arabidopsis thaliana (Mouse-ear cress).